Reading from the N-terminus, the 135-residue chain is NAD(P)H-quinone oxidoreductase subunit 3 (135 aa).

The next 3 membrane-spanning stretches (helical) occupy residues 15–35 (IVFF…SSLV), 79–99 (MFAL…PWAV), and 104–124 (LGLL…VALV).

This sequence belongs to the complex I subunit 3 family. NDH-1 can be composed of about 15 different subunits; different subcomplexes with different compositions have been identified which probably have different functions.

The protein localises to the cellular thylakoid membrane. The catalysed reaction is a plastoquinone + NADH + (n+1) H(+)(in) = a plastoquinol + NAD(+) + n H(+)(out). It catalyses the reaction a plastoquinone + NADPH + (n+1) H(+)(in) = a plastoquinol + NADP(+) + n H(+)(out). NDH-1 shuttles electrons from an unknown electron donor, via FMN and iron-sulfur (Fe-S) centers, to quinones in the respiratory and/or the photosynthetic chain. The immediate electron acceptor for the enzyme in this species is believed to be plastoquinone. Couples the redox reaction to proton translocation, and thus conserves the redox energy in a proton gradient. Cyanobacterial NDH-1 also plays a role in inorganic carbon-concentration. This is NAD(P)H-quinone oxidoreductase subunit 3 from Trichodesmium erythraeum (strain IMS101).